A 473-amino-acid polypeptide reads, in one-letter code: 3-isopropylmalate dehydratase large subunit (473 aa).

Residues Cys351, Cys414, and Cys417 each coordinate [4Fe-4S] cluster.

Belongs to the aconitase/IPM isomerase family. LeuC type 1 subfamily. As to quaternary structure, heterodimer of LeuC and LeuD. [4Fe-4S] cluster serves as cofactor.

The catalysed reaction is (2R,3S)-3-isopropylmalate = (2S)-2-isopropylmalate. The protein operates within amino-acid biosynthesis; L-leucine biosynthesis; L-leucine from 3-methyl-2-oxobutanoate: step 2/4. In terms of biological role, catalyzes the isomerization between 2-isopropylmalate and 3-isopropylmalate, via the formation of 2-isopropylmaleate. The chain is 3-isopropylmalate dehydratase large subunit from Acidovorax sp. (strain JS42).